A 343-amino-acid chain; its full sequence is uncharacterized protein (343 aa).

It belongs to the IIV-6 219L family.

This is an uncharacterized protein from Invertebrate iridescent virus 6 (IIV-6).